The following is a 286-amino-acid chain: Putative chaperone BssE (286 aa).

Residues 47–54 (GKQGCGKS) and 108–115 (GCVIHLEE) each bind ATP.

It belongs to the CbbQ/NirQ/NorQ/GpvN family.

In terms of biological role, may have a role in assembly and/or activation of benzylsuccinate synthase. This chain is Putative chaperone BssE (bssE), found in Thauera aromatica.